The sequence spans 281 residues: Biotin synthase (281 aa).

A Radical SAM core domain is found at M1–R230. [4Fe-4S] cluster-binding residues include C18, C22, and C25. The [2Fe-2S] cluster site is built by C62, C97, and R223.

Belongs to the radical SAM superfamily. Biotin synthase family. As to quaternary structure, homodimer. It depends on [4Fe-4S] cluster as a cofactor. Requires [2Fe-2S] cluster as cofactor.

The catalysed reaction is (4R,5S)-dethiobiotin + (sulfur carrier)-SH + 2 reduced [2Fe-2S]-[ferredoxin] + 2 S-adenosyl-L-methionine = (sulfur carrier)-H + biotin + 2 5'-deoxyadenosine + 2 L-methionine + 2 oxidized [2Fe-2S]-[ferredoxin]. It participates in cofactor biosynthesis; biotin biosynthesis; biotin from 7,8-diaminononanoate: step 2/2. Functionally, catalyzes the conversion of dethiobiotin (DTB) to biotin by the insertion of a sulfur atom into dethiobiotin via a radical-based mechanism. The chain is Biotin synthase from Sulfurimonas denitrificans (strain ATCC 33889 / DSM 1251) (Thiomicrospira denitrificans (strain ATCC 33889 / DSM 1251)).